The sequence spans 210 residues: Protein-methionine-sulfoxide reductase heme-binding subunit MsrQ (210 aa).

6 helical membrane-spanning segments follow: residues L8 to F28, V37 to T57, L75 to L95, P110 to N130, L147 to L167, and E169 to T189.

It belongs to the MsrQ family. Heterodimer of a catalytic subunit (MsrP) and a heme-binding subunit (MsrQ). FMN is required as a cofactor. Requires heme b as cofactor.

Its subcellular location is the cell inner membrane. In terms of biological role, part of the MsrPQ system that repairs oxidized periplasmic proteins containing methionine sulfoxide residues (Met-O), using respiratory chain electrons. Thus protects these proteins from oxidative-stress damage caused by reactive species of oxygen and chlorine generated by the host defense mechanisms. MsrPQ is essential for the maintenance of envelope integrity under bleach stress, rescuing a wide series of structurally unrelated periplasmic proteins from methionine oxidation. MsrQ provides electrons for reduction to the reductase catalytic subunit MsrP, using the quinone pool of the respiratory chain. In Pseudomonas savastanoi pv. phaseolicola (strain 1448A / Race 6) (Pseudomonas syringae pv. phaseolicola (strain 1448A / Race 6)), this protein is Protein-methionine-sulfoxide reductase heme-binding subunit MsrQ.